The following is a 370-amino-acid chain: Aminomethyltransferase (370 aa).

It belongs to the GcvT family. The glycine cleavage system is composed of four proteins: P, T, L and H.

It carries out the reaction N(6)-[(R)-S(8)-aminomethyldihydrolipoyl]-L-lysyl-[protein] + (6S)-5,6,7,8-tetrahydrofolate = N(6)-[(R)-dihydrolipoyl]-L-lysyl-[protein] + (6R)-5,10-methylene-5,6,7,8-tetrahydrofolate + NH4(+). In terms of biological role, the glycine cleavage system catalyzes the degradation of glycine. The protein is Aminomethyltransferase of Clostridium botulinum (strain Loch Maree / Type A3).